Reading from the N-terminus, the 376-residue chain is Heme chaperone HemW (376 aa).

A Radical SAM core domain is found at Met1–Lys233. Tyr10 serves as a coordination point for S-adenosyl-L-methionine. Cys16, Cys20, and Cys23 together coordinate [4Fe-4S] cluster. Residues Gly66, Gly67 to Thr68, Glu99, Gln126, Arg138, and Asp162 each bind S-adenosyl-L-methionine.

Belongs to the anaerobic coproporphyrinogen-III oxidase family. HemW subfamily. It depends on [4Fe-4S] cluster as a cofactor.

Its subcellular location is the cytoplasm. Functionally, probably acts as a heme chaperone, transferring heme to an unknown acceptor. Binds one molecule of heme per monomer, possibly covalently. Binds 1 [4Fe-4S] cluster. The cluster is coordinated with 3 cysteines and an exchangeable S-adenosyl-L-methionine. This chain is Heme chaperone HemW, found in Buchnera aphidicola subsp. Acyrthosiphon pisum (strain APS) (Acyrthosiphon pisum symbiotic bacterium).